Consider the following 544-residue polypeptide: MGEDDIVELLWNGQVVRTSQPQRPSSGKPSPTPPILRGSGSGSGEENAPLPLPLLQPPRPLHHQNLFIREEEMSSWLHYSYTGVTSTPATHPQSSVSLPPPPPIAPSEDDVVELLWKSGQVVQSIQTQRPIPPPIFRGSGSGGGEETVLPLPPLHPSHQNIFIQEDEMASWLYHPLRQDYFSSGVASTSATRPQSSASLAPTPPPPSVPYGQIPVERRTENFMNFLRLRGNIFSGGRVEAGPVVIESTQIGSSATPSSSAAESCVIPATHGTESRAAAITGVSRTFAVPGLGRRGKEVATETAGTSYSGVNKAETERVQIQPERETKITEDKKREETIAEIQGTEEAHGSTSRKRSRAADMHNLSERRRRERINERMKTLQELLPRCRKTDKVSMLEDVIEYVKSLQLQIQMMSMGHGMMPPMMHEGNTQQFMPHMAMGMKGMNRPPPFVPFPGKTFPRPGHMAGVGPSYPALRYPFPDTQASDLSRVHVPSLHSNPVPNQPRFPAYINPYSQFVGLHQMQQPPLPLQGQPTSQPSFSHASTSK.

2 disordered regions span residues 12 to 59 (NGQV…QPPR) and 185 to 208 (VAST…PPSV). Residues 15-29 (VVRTSQPQRPSSGKP) are compositionally biased toward polar residues. Over residues 50–59 (LPLPLLQPPR) the composition is skewed to pro residues. T269 carries the phosphothreonine modification. A Phosphoserine modification is found at S274. 2 disordered regions span residues 342-364 (QGTE…MHNL) and 522-544 (QPPL…STSK). The 50-residue stretch at 357-406 (RAADMHNLSERRRRERINERMKTLQELLPRCRKTDKVSMLEDVIEYVKSL) folds into the bHLH domain. A compositionally biased stretch (low complexity) spans 522–535 (QPPLPLQGQPTSQP). Phosphoserine occurs at positions 541 and 543.

As to quaternary structure, homodimer.

Its subcellular location is the nucleus. This Arabidopsis thaliana (Mouse-ear cress) protein is Transcription factor bHLH119 (BHLH119).